Reading from the N-terminus, the 204-residue chain is Protein GrpE (204 aa).

Residues 1 to 12 (MSNEEQAQKDDA) show a composition bias toward basic and acidic residues. The tract at residues 1–32 (MSNEEQAQKDDAQPVNEAAIDATAEQADAEVE) is disordered. The segment covering 17 to 26 (EAAIDATAEQ) has biased composition (low complexity).

This sequence belongs to the GrpE family. Homodimer.

It localises to the cytoplasm. Functionally, participates actively in the response to hyperosmotic and heat shock by preventing the aggregation of stress-denatured proteins, in association with DnaK and GrpE. It is the nucleotide exchange factor for DnaK and may function as a thermosensor. Unfolded proteins bind initially to DnaJ; upon interaction with the DnaJ-bound protein, DnaK hydrolyzes its bound ATP, resulting in the formation of a stable complex. GrpE releases ADP from DnaK; ATP binding to DnaK triggers the release of the substrate protein, thus completing the reaction cycle. Several rounds of ATP-dependent interactions between DnaJ, DnaK and GrpE are required for fully efficient folding. The sequence is that of Protein GrpE from Pseudoalteromonas atlantica (strain T6c / ATCC BAA-1087).